The following is a 148-amino-acid chain: Large-conductance mechanosensitive channel (148 aa).

3 consecutive transmembrane segments (helical) span residues 21–41 (IDLA…DSVV), 45–65 (IMPL…KFLV), and 92–112 (GNFL…FIIV).

It belongs to the MscL family. In terms of assembly, homopentamer.

It is found in the cell inner membrane. Functionally, channel that opens in response to stretch forces in the membrane lipid bilayer. May participate in the regulation of osmotic pressure changes within the cell. The protein is Large-conductance mechanosensitive channel of Bordetella petrii (strain ATCC BAA-461 / DSM 12804 / CCUG 43448).